Reading from the N-terminus, the 299-residue chain is Apolipoprotein E (299 aa).

The N-terminal stretch at 1–18 is a signal peptide; the sequence is MKVLCTVLVVTLLAGCRA. 7 consecutive repeat copies span residues 74 to 95, 96 to 117, 118 to 139, 140 to 161, 162 to 183, 184 to 205, and 224 to 245. Residues 74-245 form an 8 X 22 AA approximate tandem repeats region; it reads VLMEDTMKAV…RLEEMREQME (172 aa). Met137 bears the Methionine sulfoxide mark. A Phosphoserine modification is found at Ser141. The tract at residues 152–162 is LDL and other lipoprotein receptors binding; it reads HLRKLRKRMLR. Residue 156 to 159 coordinates heparin; the sequence is LRKR. Residues 204–273 are lipid-binding and lipoprotein association; it reads AALTGQPLQE…GWFEPMVEDM (70 aa). 219–226 serves as a coordination point for heparin; sequence GKQLRGRL. Residues 261–273 form a specificity for association with VLDL region; that stretch reads RLKGWFEPMVEDM.

The protein belongs to the apolipoprotein A1/A4/E family. In terms of assembly, homotetramer. May interact with ABCA1; functionally associated with ABCA1 in the biogenesis of HDLs. May interact with APP/A4 amyloid-beta peptide; the interaction is extremely stable in vitro but its physiological significance is unclear. May interact with MAPT. May interact with MAP2. In the cerebrospinal fluid, interacts with secreted SORL1. Interacts with PMEL; this allows the loading of PMEL luminal fragment on ILVs to induce fibril nucleation. In terms of processing, APOE exists as multiple glycosylated and sialylated glycoforms within cells and in plasma. The extent of glycosylation and sialylation are tissue and context specific. Post-translationally, glycated in plasma VLDL. Phosphorylated by FAM20C in the extracellular medium.

It is found in the secreted. The protein resides in the extracellular space. The protein localises to the extracellular matrix. It localises to the extracellular vesicle. Its subcellular location is the endosome. It is found in the multivesicular body. APOE is an apolipoprotein, a protein associating with lipid particles, that mainly functions in lipoprotein-mediated lipid transport between organs via the plasma and interstitial fluids. APOE is a core component of plasma lipoproteins and is involved in their production, conversion and clearance. Apolipoproteins are amphipathic molecules that interact both with lipids of the lipoprotein particle core and the aqueous environment of the plasma. As such, APOE associates with chylomicrons, chylomicron remnants, very low density lipoproteins (VLDL) and intermediate density lipoproteins (IDL) but shows a preferential binding to high-density lipoproteins (HDL). It also binds a wide range of cellular receptors including the LDL receptor/LDLR, the LDL receptor-related proteins LRP1, LRP2 and LRP8 and the very low-density lipoprotein receptor/VLDLR that mediate the cellular uptake of the APOE-containing lipoprotein particles. Finally, APOE also has a heparin-binding activity and binds heparan-sulfate proteoglycans on the surface of cells, a property that supports the capture and the receptor-mediated uptake of APOE-containing lipoproteins by cells. A main function of APOE is to mediate lipoprotein clearance through the uptake of chylomicrons, VLDLs, and HDLs by hepatocytes. APOE is also involved in the biosynthesis by the liver of VLDLs as well as their uptake by peripheral tissues ensuring the delivery of triglycerides and energy storage in muscle, heart and adipose tissues. By participating in the lipoprotein-mediated distribution of lipids among tissues, APOE plays a critical role in plasma and tissues lipid homeostasis. APOE is also involved in two steps of reverse cholesterol transport, the HDLs-mediated transport of cholesterol from peripheral tissues to the liver, and thereby plays an important role in cholesterol homeostasis. First, it is functionally associated with ABCA1 in the biogenesis of HDLs in tissues. Second, it is enriched in circulating HDLs and mediates their uptake by hepatocytes. APOE also plays an important role in lipid transport in the central nervous system, regulating neuron survival and sprouting. The polypeptide is Apolipoprotein E (APOE) (Octodon degus (Degu)).